The sequence spans 237 residues: Ribonuclease PH (237 aa).

Phosphate contacts are provided by residues Arg86 and 124–126 (GTR).

It belongs to the RNase PH family. Homohexameric ring arranged as a trimer of dimers.

It catalyses the reaction tRNA(n+1) + phosphate = tRNA(n) + a ribonucleoside 5'-diphosphate. Phosphorolytic 3'-5' exoribonuclease that plays an important role in tRNA 3'-end maturation. Removes nucleotide residues following the 3'-CCA terminus of tRNAs; can also add nucleotides to the ends of RNA molecules by using nucleoside diphosphates as substrates, but this may not be physiologically important. Probably plays a role in initiation of 16S rRNA degradation (leading to ribosome degradation) during starvation. The polypeptide is Ribonuclease PH (Beijerinckia indica subsp. indica (strain ATCC 9039 / DSM 1715 / NCIMB 8712)).